Consider the following 64-residue polypeptide: Large ribosomal subunit protein bL35 (64 aa).

The segment covering 1 to 28 (MPKMKTKSGAAKRFKKTAGGLKHKHAFK) has biased composition (basic residues). The disordered stretch occupies residues 1–64 (MPKMKTKSGA…ARVERSLRLR (64 aa)). The span at 53-64 (DVARVERSLRLR) shows a compositional bias: basic and acidic residues.

Belongs to the bacterial ribosomal protein bL35 family.

The polypeptide is Large ribosomal subunit protein bL35 (Pseudomonas aeruginosa (strain LESB58)).